The following is a 473-amino-acid chain: MTHGLPHFTSAQVLVIGDVILDRYWHGTTSRISPEAPVPVVQVTGREDRPGGAGNVAVNVAALGAEVTLLGLIGADEAAAALRSLLAHRGVHCCLEGLPNIATLTKLRVISRHQQLIRLDFEDDFIPAHGEALLPAYSTALRGKSVVILSDYGKGTLQEPQRLIALGREVGVPILIDPKGADFSHYHGATIITPNLAEFEMVVGPCPDEASLVWKGEQLRQQLALKALLITRGEQGMTLLEQGHSPVHLPTEAREVFDVTGAGDTVISVLGAALAAGGTFKEATLLANQAAGIVVGKLGTASVTRDELQQALHPRAIRRGITSEEELLHFINLARSRGECIVMTNGCFDILHPGHVNYLAEARQLGDRLIVAVNDDASVQRLKGKNRPINSLAQRLTVLAALHDVDWVVPFSEDTPARLIERVLPDILVKGGDYTPEQIAGANAVVANGGKIIILTYQQGCSTSQIIDIIRKN.

Residues 1–317 (MTHGLPHFTS…LQQALHPRAI (317 aa)) are ribokinase. 195 to 198 (NLAE) is an ATP binding site. Residue aspartate 264 is part of the active site. Residues 343–473 (MTNGCFDILH…SQIIDIIRKN (131 aa)) form a cytidylyltransferase region.

The protein in the N-terminal section; belongs to the carbohydrate kinase PfkB family. In the C-terminal section; belongs to the cytidylyltransferase family. Homodimer.

It carries out the reaction D-glycero-beta-D-manno-heptose 7-phosphate + ATP = D-glycero-beta-D-manno-heptose 1,7-bisphosphate + ADP + H(+). The enzyme catalyses D-glycero-beta-D-manno-heptose 1-phosphate + ATP + H(+) = ADP-D-glycero-beta-D-manno-heptose + diphosphate. Its pathway is nucleotide-sugar biosynthesis; ADP-L-glycero-beta-D-manno-heptose biosynthesis; ADP-L-glycero-beta-D-manno-heptose from D-glycero-beta-D-manno-heptose 7-phosphate: step 1/4. It functions in the pathway nucleotide-sugar biosynthesis; ADP-L-glycero-beta-D-manno-heptose biosynthesis; ADP-L-glycero-beta-D-manno-heptose from D-glycero-beta-D-manno-heptose 7-phosphate: step 3/4. In terms of biological role, catalyzes the phosphorylation of D-glycero-D-manno-heptose 7-phosphate at the C-1 position to selectively form D-glycero-beta-D-manno-heptose-1,7-bisphosphate. Its function is as follows. Catalyzes the ADP transfer from ATP to D-glycero-beta-D-manno-heptose 1-phosphate, yielding ADP-D-glycero-beta-D-manno-heptose. This Nitrosococcus oceani (strain ATCC 19707 / BCRC 17464 / JCM 30415 / NCIMB 11848 / C-107) protein is Bifunctional protein HldE.